The primary structure comprises 250 residues: Triosephosphate isomerase (250 aa).

Asn-9–Lys-11 serves as a coordination point for substrate. Residue His-95 is the Electrophile of the active site. Glu-167 acts as the Proton acceptor in catalysis. Substrate contacts are provided by residues Gly-173, Ser-212, and Gly-233 to Gly-234.

Belongs to the triosephosphate isomerase family. Homodimer.

It is found in the cytoplasm. It carries out the reaction D-glyceraldehyde 3-phosphate = dihydroxyacetone phosphate. The protein operates within carbohydrate biosynthesis; gluconeogenesis. It functions in the pathway carbohydrate degradation; glycolysis; D-glyceraldehyde 3-phosphate from glycerone phosphate: step 1/1. Involved in the gluconeogenesis. Catalyzes stereospecifically the conversion of dihydroxyacetone phosphate (DHAP) to D-glyceraldehyde-3-phosphate (G3P). This is Triosephosphate isomerase from Endomicrobium trichonymphae.